A 957-amino-acid chain; its full sequence is UvrABC system protein A (957 aa).

33–40 (GLSGSGKS) is an ATP binding site. A C4-type zinc finger spans residues 252 to 279 (CPQCGFSIPELEPRMFSFNSPFGACPTC). ABC transporter domains are found at residues 309 to 587 (WEPI…AKSL) and 607 to 935 (PNGR…KYLR). 639 to 646 (GVSGSGKS) provides a ligand contact to ATP. The C4-type zinc finger occupies 738–764 (CEACRGDGIIKIEMHFLPDVYVPCEVC).

Belongs to the ABC transporter superfamily. UvrA family. Forms a heterotetramer with UvrB during the search for lesions.

Its subcellular location is the cytoplasm. Its function is as follows. The UvrABC repair system catalyzes the recognition and processing of DNA lesions. UvrA is an ATPase and a DNA-binding protein. A damage recognition complex composed of 2 UvrA and 2 UvrB subunits scans DNA for abnormalities. When the presence of a lesion has been verified by UvrB, the UvrA molecules dissociate. The sequence is that of UvrABC system protein A from Halalkalibacterium halodurans (strain ATCC BAA-125 / DSM 18197 / FERM 7344 / JCM 9153 / C-125) (Bacillus halodurans).